The following is a 638-amino-acid chain: Intron-encoded RNA maturase bI4 (638 aa).

Positions 1-253 (MAFRKSNVYL…VFYSPNTLGQ (253 aa)) are COB exons 1 to 4 encoded. Positions 253-638 (QNMALLLITY…LKFNEKWNNN (386 aa)) are COB intron 4 encoded.

The protein in the C-terminal section; belongs to the LAGLIDADG endonuclease family. In terms of assembly, forms a ternary complex with intron derived RNA and the imported mitochondrial leucyl-tRNA synthetase NAM2. The proteins do not interact directly with each other. The mature protein may arise from proteolytic cleavage of an in-frame translation of COB exons 1 to 4 plus intron 4, containing the bI4 open reading frame. Cleavage would take place close to the Met-385 resulting in an active maturase of about 30 kDa.

The protein resides in the mitochondrion. Functionally, mitochondrial mRNA maturase required for splicing of intron 4 of the cytochrome b (COB) gene, containing its own coding sequence, and intron 4 in COX1, coding for the related homing endonuclease aI4. In vivo splicing requires in addition the imported mitochondrial leucyl-tRNA synthetase NAM2. Both proteins seem to stimulate the intrinsic ribozyme activity of intron bI4 through binding to and stabilizing specific secondary and tertiary structure elements in the RNA. The protein is Intron-encoded RNA maturase bI4 (BI4) of Saccharomyces cerevisiae (strain ATCC 204508 / S288c) (Baker's yeast).